We begin with the raw amino-acid sequence, 290 residues long: Probable ATP-dependent kinase TDA10 (290 aa).

38–45 provides a ligand contact to ATP; the sequence is GPQGSGKS.

This sequence belongs to the GLYK kinase family.

The protein resides in the cytoplasm. The protein localises to the nucleus. ATP-dependent kinase whose specificity is not yet known. The polypeptide is Probable ATP-dependent kinase TDA10 (TDA10) (Saccharomyces cerevisiae (strain ATCC 204508 / S288c) (Baker's yeast)).